The chain runs to 242 residues: Biosynthetic peptidoglycan transglycosylase (242 aa).

A helical transmembrane segment spans residues F15–S35.

Belongs to the glycosyltransferase 51 family.

The protein resides in the cell inner membrane. It carries out the reaction [GlcNAc-(1-&gt;4)-Mur2Ac(oyl-L-Ala-gamma-D-Glu-L-Lys-D-Ala-D-Ala)](n)-di-trans,octa-cis-undecaprenyl diphosphate + beta-D-GlcNAc-(1-&gt;4)-Mur2Ac(oyl-L-Ala-gamma-D-Glu-L-Lys-D-Ala-D-Ala)-di-trans,octa-cis-undecaprenyl diphosphate = [GlcNAc-(1-&gt;4)-Mur2Ac(oyl-L-Ala-gamma-D-Glu-L-Lys-D-Ala-D-Ala)](n+1)-di-trans,octa-cis-undecaprenyl diphosphate + di-trans,octa-cis-undecaprenyl diphosphate + H(+). It functions in the pathway cell wall biogenesis; peptidoglycan biosynthesis. Functionally, peptidoglycan polymerase that catalyzes glycan chain elongation from lipid-linked precursors. In Shigella sonnei (strain Ss046), this protein is Biosynthetic peptidoglycan transglycosylase.